The sequence spans 148 residues: Deoxyuridine 5'-triphosphate nucleotidohydrolase (148 aa).

Residues 67–69 (RSG), N80, 84–86 (LID), and M94 each bind substrate.

Belongs to the dUTPase family. The cofactor is Mg(2+).

The catalysed reaction is dUTP + H2O = dUMP + diphosphate + H(+). It functions in the pathway pyrimidine metabolism; dUMP biosynthesis; dUMP from dCTP (dUTP route): step 2/2. Its function is as follows. This enzyme is involved in nucleotide metabolism: it produces dUMP, the immediate precursor of thymidine nucleotides and it decreases the intracellular concentration of dUTP so that uracil cannot be incorporated into DNA. The polypeptide is Deoxyuridine 5'-triphosphate nucleotidohydrolase (Francisella tularensis subsp. tularensis (strain FSC 198)).